A 499-amino-acid chain; its full sequence is Putative ribose/galactose/methyl galactoside import ATP-binding protein 3 (499 aa).

ABC transporter domains follow at residues 8–243 and 253–497; these read LRMR…VGRE and SKIG…TGEE. Residue 40–47 coordinates ATP; sequence GENGAGKS.

It belongs to the ABC transporter superfamily. Carbohydrate importer 2 (CUT2) (TC 3.A.1.2) family.

The protein localises to the cell inner membrane. It catalyses the reaction D-ribose(out) + ATP + H2O = D-ribose(in) + ADP + phosphate + H(+). It carries out the reaction D-galactose(out) + ATP + H2O = D-galactose(in) + ADP + phosphate + H(+). In terms of biological role, part of an ABC transporter complex involved in carbohydrate import. Could be involved in ribose, galactose and/or methyl galactoside import. Responsible for energy coupling to the transport system. The polypeptide is Putative ribose/galactose/methyl galactoside import ATP-binding protein 3 (Agrobacterium fabrum (strain C58 / ATCC 33970) (Agrobacterium tumefaciens (strain C58))).